The following is a 95-amino-acid chain: Small ribosomal subunit protein bS6 (95 aa).

Belongs to the bacterial ribosomal protein bS6 family.

Binds together with bS18 to 16S ribosomal RNA. The protein is Small ribosomal subunit protein bS6 of Corynebacterium diphtheriae (strain ATCC 700971 / NCTC 13129 / Biotype gravis).